Here is a 332-residue protein sequence, read N- to C-terminus: Flotillin-like protein FloA (332 aa).

The chain crosses the membrane as a helical span at residues 9–29 (FILIGGGIIFVVLFFHYVPFF).

The protein belongs to the flotillin-like FloA family. In terms of assembly, homooligomerizes.

It localises to the cell membrane. Its subcellular location is the membrane raft. Functionally, found in functional membrane microdomains (FMM) that may be equivalent to eukaryotic membrane rafts. FMMs are highly dynamic and increase in number as cells age. Flotillins are thought to be important factors in membrane fluidity. This chain is Flotillin-like protein FloA, found in Phocaeicola vulgatus (strain ATCC 8482 / DSM 1447 / JCM 5826 / CCUG 4940 / NBRC 14291 / NCTC 11154) (Bacteroides vulgatus).